Here is a 322-residue protein sequence, read N- to C-terminus: Putative small RNA degrading nuclease 4 (322 aa).

Residues 75-213 (MLALDCEMVL…HDAAAAMKLA (139 aa)) form the Exonuclease domain.

Belongs to the REXO1/REXO3 family.

It is found in the nucleus. Its function is as follows. Putative 3'-5' exonuclease degrading single-stranded small RNAs. The polypeptide is Putative small RNA degrading nuclease 4 (SDN4) (Arabidopsis thaliana (Mouse-ear cress)).